The chain runs to 397 residues: Decapping and exoribonuclease protein (397 aa).

Positions Met-1–Ala-10 are enriched in basic residues. The segment at Met-1–Arg-30 is disordered. Substrate is bound by residues Arg-58, Glu-101, and Trp-131–Gly-133. Met-185 serves as a coordination point for adenosine 3',5'-bisphosphate. Residue Glu-192 coordinates Mg(2+). Substrate is bound by residues Cys-217 and Glu-234. Mg(2+) is bound by residues Glu-234, Asp-236, Glu-253, and Leu-254. Asp-236 lines the adenosine 3',5'-bisphosphate pocket. The segment at Glu-253–Thr-256 is adenosine 3',5'-bisphosphate; inhibitor. Substrate contacts are provided by Lys-255 and Gln-280. Gln-280 is a binding site for adenosine 3',5'-bisphosphate. Residue Thr-392 is modified to Phosphothreonine. Phosphoserine is present on Ser-394.

Belongs to the DXO/Dom3Z family. Mg(2+) serves as cofactor.

The protein resides in the nucleus. It catalyses the reaction a 5'-end triphospho-ribonucleoside in mRNA + H2O = a 5'-end phospho-ribonucleoside in mRNA + diphosphate + H(+). It carries out the reaction a 5'-end NAD(+)-phospho-ribonucleoside in mRNA + H2O = a 5'-end phospho-ribonucleoside in mRNA + NAD(+) + H(+). The catalysed reaction is a 5'-end NAD(+)-phospho-ribonucleoside in snoRNA + H2O = a 5'-end phospho-ribonucleoside in snoRNA + NAD(+) + H(+). The enzyme catalyses a 5'-end (N(7)-methyl 5'-triphosphoguanosine)-ribonucleoside-ribonucleotide in mRNA + H2O = a (N(7)-methyl 5'-triphosphoguanosine)-nucleoside + a 5'-end phospho-ribonucleoside in mRNA + H(+). It catalyses the reaction a 5'-end FAD-phospho-ribonucleoside in mRNA + H2O = a 5'-end phospho-ribonucleoside in mRNA + FAD + H(+). It carries out the reaction a 5'-end CoA-ribonucleoside in mRNA + H2O = 3'-dephospho-CoA + a 5'-end phospho-ribonucleoside in mRNA + H(+). With respect to regulation, the 5'-3' exoribonuclease activity is inhibited by adenosine 3',5'-bisphosphate. Functionally, decapping enzyme for NAD-capped RNAs: specifically hydrolyzes the nicotinamide adenine dinucleotide (NAD) cap from a subset of RNAs by removing the entire NAD moiety from the 5'-end of an NAD-capped RNA. The NAD-cap is present at the 5'-end of some RNAs and snoRNAs. In contrast to the canonical 5'-end N7 methylguanosine (m7G) cap, the NAD cap promotes mRNA decay. Preferentially acts on NAD-capped transcripts in response to environmental stress. Also acts as a non-canonical decapping enzyme that removes the entire cap structure of m7G capped or incompletely capped RNAs and mediates their subsequent degradation. Specifically degrades pre-mRNAs with a defective 5'-end m7G cap and is part of a pre-mRNA capping quality control. Has decapping activity toward incomplete 5'-end m7G cap mRNAs such as unmethylated 5'-end-capped RNA (cap0), while it has no activity toward 2'-O-ribose methylated m7G cap (cap1). In contrast to canonical decapping enzymes DCP2 and NUDT16, which cleave the cap within the triphosphate linkage, the decapping activity releases the entire cap structure GpppN and a 5'-end monophosphate RNA. Also has 5'-3' exoribonuclease activities: The 5'-end monophosphate RNA is then degraded by the 5'-3' exoribonuclease activity, enabling this enzyme to decap and degrade incompletely capped mRNAs. Also possesses RNA 5'-pyrophosphohydrolase activity by hydrolyzing the 5'-end triphosphate to release pyrophosphates. Exhibits decapping activity towards FAD-capped RNAs. Exhibits decapping activity towards dpCoA-capped RNAs in vitro. This Mus musculus (Mouse) protein is Decapping and exoribonuclease protein.